The sequence spans 55 residues: Large ribosomal subunit protein bL33 (55 aa).

Belongs to the bacterial ribosomal protein bL33 family.

The sequence is that of Large ribosomal subunit protein bL33 from Chelativorans sp. (strain BNC1).